The chain runs to 312 residues: HPr kinase/phosphorylase (312 aa).

Catalysis depends on residues His141 and Lys162. ATP is bound at residue 156–163 (GDSGIGKS). Ser163 lines the Mg(2+) pocket. Asp180 (proton acceptor; for phosphorylation activity. Proton donor; for dephosphorylation activity) is an active-site residue. Residues 204 to 213 (LEIRGVGIID) form an important for the catalytic mechanism of both phosphorylation and dephosphorylation region. Glu205 contacts Mg(2+). Residue Arg246 is part of the active site. Positions 267-272 (PVRVGR) are important for the catalytic mechanism of dephosphorylation.

The protein belongs to the HPrK/P family. As to quaternary structure, homohexamer. The cofactor is Mg(2+).

It carries out the reaction [HPr protein]-L-serine + ATP = [HPr protein]-O-phospho-L-serine + ADP + H(+). It catalyses the reaction [HPr protein]-O-phospho-L-serine + phosphate + H(+) = [HPr protein]-L-serine + diphosphate. Its function is as follows. Catalyzes the ATP- as well as the pyrophosphate-dependent phosphorylation of a specific serine residue in HPr, a phosphocarrier protein of the phosphoenolpyruvate-dependent sugar phosphotransferase system (PTS). HprK/P also catalyzes the pyrophosphate-producing, inorganic phosphate-dependent dephosphorylation (phosphorolysis) of seryl-phosphorylated HPr (P-Ser-HPr). The two antagonistic activities of HprK/P are regulated by several intracellular metabolites, which change their concentration in response to the absence or presence of rapidly metabolisable carbon sources (glucose, fructose, etc.) in the growth medium. Therefore, by controlling the phosphorylation state of HPr, HPrK/P is a sensor enzyme that plays a major role in the regulation of carbon metabolism and sugar transport: it mediates carbon catabolite repression (CCR), and regulates PTS-catalyzed carbohydrate uptake and inducer exclusion. This Pediococcus pentosaceus (strain ATCC 25745 / CCUG 21536 / LMG 10740 / 183-1w) protein is HPr kinase/phosphorylase.